The chain runs to 368 residues: Mitogen-activated protein kinase KSS1 (368 aa).

The Protein kinase domain maps to 13–313; the sequence is YKLVDLIGEG…AAEALRHPYL (301 aa). Residues 19-27 and Lys42 each bind ATP; that span reads IGEGAYGTV. Catalysis depends on Asp143, which acts as the Proton acceptor. Residue Thr183 is modified to Phosphothreonine. Residues 183–185 carry the TXY motif; the sequence is TEY. The residue at position 185 (Tyr185) is a Phosphotyrosine.

The protein belongs to the protein kinase superfamily. Ser/Thr protein kinase family. MAP kinase subfamily. HOG1 sub-subfamily. In terms of assembly, in the nucleus, KSS1 forms a complex with DIG1, DIG2 and STE12; in contrast to FUS3 the interaction of KSS1 with STE12 does not depend on DIG1 and DIG2. Phosphorylated KSS1 shows reduced interaction with STE12. During pheromone activation and phosphorylation, KSS1 forms a membrane-associated complex with the scaffold protein STE5, the MAPKK STE7, the MAPKKK STE11, and the G-protein beta subunit GBB/STE4; interacting directly with POF1, STE7 and STE5 proteins. The cofactor is Mg(2+). Post-translationally, dually phosphorylated on Thr-183 and Tyr-185 by STE7 in response to pheromone or carbon/nitrogen limitation, which activates the enzyme. Activated FUS3 down-regulates KSS1 phosphorylation.

It is found in the nucleus. It localises to the cytoplasm. Its subcellular location is the periplasm. It catalyses the reaction L-seryl-[protein] + ATP = O-phospho-L-seryl-[protein] + ADP + H(+). The catalysed reaction is L-threonyl-[protein] + ATP = O-phospho-L-threonyl-[protein] + ADP + H(+). Its activity is regulated as follows. Activated by tyrosine and threonine phosphorylation after pheromone treatment or carbon/nitrogen limitation. Functionally, together with closely related FUS3, KSS1 is the final kinase in the signal transduction cascade regulating activation/repression of the mating and filamentation pathways, induced by pheromone and nitrogen/carbon limitation, respectively. Phosphorylated KSS1 activates both pathways, whereas activated FUS3 activates the mating but suppresses the filamentation pathway. KSS1 activity is down-regulated by FUS3 during pheromone induction to prevent inappropriate activation of the filamentation pathway. During induction of filamentation, KSS1 activates the transcription factor STE12 resulting in its binding to and activation of filamentation specific genes. Non-activated KSS1 has a kinase-independent repressive effect on STE12 transcriptional activity, that is mediated by direct binding to STE12 and depends on the presence of DIG1 and DIG2, and that is required for the suppression of filamentation under normal growth conditions. SSN3/SRB10 contributes further to the suppression of filamentation under these conditions by reducing STE12 stability independent of KSS1. FUS3 can partially compensate for the lack of KSS1 but filamentation becomes constitutively induced at a low level in the absence of any signal. KSS1 phosphorylates STE7, STE5, FAR1, DIG1, DIG2, STE12, and SST2. The sequence is that of Mitogen-activated protein kinase KSS1 (KSS1) from Saccharomyces cerevisiae (strain ATCC 204508 / S288c) (Baker's yeast).